A 456-amino-acid polypeptide reads, in one-letter code: MTKKALSAVILAAGKGTRMYSDLPKVLHTIAGKPMVKHVIDTAHQLGAENIHLIYGHGGDLMRSHLANEQVNWVLQTEQLGTAHAVQQSAPFFKDNENIVVLYGDAPLITKETLEKLIEAKPENGIALLTVNLDNPTGYGRIIRENGNVVAIVEQKDANADQLNIKEVNTGVMVSDGASFKKWLARVGNNNAQGEYYLTDLIALANQDNCQVVAVQATDVMEVEGANNRLQLAALERYLQNKQASKLLLEGVMIYDPARFDLRGTLEHGKDVEIDVNVIIEGNVKLGDRVKIGAGCVLKNVVIGNDVEIKPYSVLEDSVVGEKAAIGPFSRLRPGAELAAETHVGNFVEIKKSTVGKGSKVNHLTYVGDSEIGSNCNIGAGVITCNYDGANKFKTIIGDDVFVGSDTQLVAPVKVANGATIGAGTTITRDVGENELVITRVAQRHIQGWQRPIKKK.

The interval 1–229 is pyrophosphorylase; that stretch reads MTKKALSAVI…VMEVEGANNR (229 aa). UDP-N-acetyl-alpha-D-glucosamine is bound by residues 11-14, Lys-25, Gln-76, 81-82, 103-105, Gly-140, Glu-154, Asn-169, and Asn-227; these read LAAG, GT, and YGD. Mg(2+) is bound at residue Asp-105. Position 227 (Asn-227) interacts with Mg(2+). The linker stretch occupies residues 230–250; it reads LQLAALERYLQNKQASKLLLE. Residues 251-456 are N-acetyltransferase; it reads GVMIYDPARF…QGWQRPIKKK (206 aa). The UDP-N-acetyl-alpha-D-glucosamine site is built by Arg-333 and Lys-351. His-363 functions as the Proton acceptor in the catalytic mechanism. UDP-N-acetyl-alpha-D-glucosamine contacts are provided by Tyr-366 and Asn-377. Acetyl-CoA-binding positions include Ala-380, 386-387, Ser-405, Ala-423, and Arg-440; that span reads NY.

The protein in the N-terminal section; belongs to the N-acetylglucosamine-1-phosphate uridyltransferase family. In the C-terminal section; belongs to the transferase hexapeptide repeat family. As to quaternary structure, homotrimer. The cofactor is Mg(2+).

The protein localises to the cytoplasm. The enzyme catalyses alpha-D-glucosamine 1-phosphate + acetyl-CoA = N-acetyl-alpha-D-glucosamine 1-phosphate + CoA + H(+). The catalysed reaction is N-acetyl-alpha-D-glucosamine 1-phosphate + UTP + H(+) = UDP-N-acetyl-alpha-D-glucosamine + diphosphate. Its pathway is nucleotide-sugar biosynthesis; UDP-N-acetyl-alpha-D-glucosamine biosynthesis; N-acetyl-alpha-D-glucosamine 1-phosphate from alpha-D-glucosamine 6-phosphate (route II): step 2/2. It functions in the pathway nucleotide-sugar biosynthesis; UDP-N-acetyl-alpha-D-glucosamine biosynthesis; UDP-N-acetyl-alpha-D-glucosamine from N-acetyl-alpha-D-glucosamine 1-phosphate: step 1/1. It participates in bacterial outer membrane biogenesis; LPS lipid A biosynthesis. Its function is as follows. Catalyzes the last two sequential reactions in the de novo biosynthetic pathway for UDP-N-acetylglucosamine (UDP-GlcNAc). The C-terminal domain catalyzes the transfer of acetyl group from acetyl coenzyme A to glucosamine-1-phosphate (GlcN-1-P) to produce N-acetylglucosamine-1-phosphate (GlcNAc-1-P), which is converted into UDP-GlcNAc by the transfer of uridine 5-monophosphate (from uridine 5-triphosphate), a reaction catalyzed by the N-terminal domain. The polypeptide is Bifunctional protein GlmU (Haemophilus influenzae (strain PittGG)).